We begin with the raw amino-acid sequence, 291 residues long: 33 kDa chaperonin (291 aa).

Intrachain disulfides connect Cys-236–Cys-238 and Cys-269–Cys-272.

It belongs to the HSP33 family. Under oxidizing conditions two disulfide bonds are formed involving the reactive cysteines. Under reducing conditions zinc is bound to the reactive cysteines and the protein is inactive.

It is found in the cytoplasm. Functionally, redox regulated molecular chaperone. Protects both thermally unfolding and oxidatively damaged proteins from irreversible aggregation. Plays an important role in the bacterial defense system toward oxidative stress. This is 33 kDa chaperonin from Lactobacillus johnsonii (strain CNCM I-12250 / La1 / NCC 533).